A 658-amino-acid polypeptide reads, in one-letter code: Exoribonuclease 2 (658 aa).

Residues 189–530 enclose the RNB domain; that stretch reads REDLTSLYFT…VNHRLIKQVL (342 aa). Residues 576–658 enclose the S1 motif domain; it reads AVEFDCEIAD…ETRSIVGNII (83 aa).

The protein belongs to the RNR ribonuclease family. RNase II subfamily.

The protein resides in the cytoplasm. It carries out the reaction Exonucleolytic cleavage in the 3'- to 5'-direction to yield nucleoside 5'-phosphates.. Involved in mRNA degradation. Hydrolyzes single-stranded polyribonucleotides processively in the 3' to 5' direction. This chain is Exoribonuclease 2, found in Actinobacillus pleuropneumoniae serotype 7 (strain AP76).